The chain runs to 492 residues: Transmembrane protein 39B (492 aa).

Residues 1-53 (MGGRRGPNRTSYYRNPLCEPGSSGASGGGHSSSASVSSVRSRSRTTSGTGLSS) are disordered. The N-linked (GlcNAc...) asparagine glycan is linked to Asn-8. Residues 31-53 (SSSASVSSVRSRSRTTSGTGLSS) are compositionally biased toward low complexity. A run of 8 helical transmembrane segments spans residues 77-97 (SILFELQLFFCQLIALFVHYI), 115-135 (TSLNFHLIDFNLLMVTAIVLG), 153-175 (SLFRSILLFLTRFTVLTATGWSL), 185-205 (TYSFLNLLFLCYPFGMYIPFL), 288-308 (EVLVSSMLSAYYVAFVPVWFV), 322-342 (LFLLVSISTSVILMQHLLPAS), 421-441 (ILNILLLLEGAVIVYQLYSLM), and 447-467 (HQTISLALILFSNYYAFFKLL).

This sequence belongs to the TMEM39 family.

Its subcellular location is the endoplasmic reticulum membrane. May protect the cells against DNA damage caused by exposure to the cold-warming stress and facilitates tissue damage repair during the recovery phase. In Mus musculus (Mouse), this protein is Transmembrane protein 39B.